Reading from the N-terminus, the 60-residue chain is Defensin-like protein 4 (60 aa).

Disulfide bonds link cysteine 4-cysteine 56, cysteine 17-cysteine 41, cysteine 26-cysteine 51, and cysteine 30-cysteine 53.

It belongs to the DEFL family. Protease inhibitor I18 (RTI/MTI-2) subfamily.

Its subcellular location is the secreted. In terms of biological role, inhibits trypsin and chymotrypsin. The protein is Defensin-like protein 4 of Brassica napus (Rape).